Consider the following 324-residue polypeptide: tRNA-modifying protein YgfZ (324 aa).

Residue W184 participates in folate binding.

The protein belongs to the tRNA-modifying YgfZ family.

It is found in the cytoplasm. Functionally, folate-binding protein involved in regulating the level of ATP-DnaA and in the modification of some tRNAs. It is probably a key factor in regulatory networks that act via tRNA modification, such as initiation of chromosomal replication. The protein is tRNA-modifying protein YgfZ of Vibrio vulnificus (strain YJ016).